The chain runs to 223 residues: Small ribosomal subunit protein uS3 (223 aa).

Positions 39-107 constitute a KH type-2 domain; it reads VREFLHKKLA…PVQINIEEVR (69 aa).

Belongs to the universal ribosomal protein uS3 family. As to quaternary structure, part of the 30S ribosomal subunit. Forms a tight complex with proteins S10 and S14.

Functionally, binds the lower part of the 30S subunit head. Binds mRNA in the 70S ribosome, positioning it for translation. This chain is Small ribosomal subunit protein uS3, found in Francisella tularensis subsp. mediasiatica (strain FSC147).